The primary structure comprises 332 residues: MAKDPVRVLVTGAAGQIGYALVPMIARGVMLGADQPVILHMLDIPPAAEALNGVKMELVDAAFPLLKGVVATTDAVEACTGVNVAVMVGGFPRKEGMERKDVMSKNVSIYKSQASALEKHAAPNCKVLVVANPANTNALILKEYAPSIPEKNISCLTRLDHNRALGQISERLNVQVSDVKNVIIWGNHSSSQYPDVNHATVATPAGEKPVRELVADDAWLNGEFISTVQQRGAAIIKARKLSSALSAASSACDHIRDWVLGTPEGTWVSMGVYSDGSYNVPAGLIYSFPVACKNGEWSIVQGLPIDEFSRKKLDATAEELSEEKALAYSCLT.

Residues 16-17 (QI), aspartate 43, and glycine 90 each bind NAD(+). Arginine 99 contributes to the oxaloacetate binding site. The NAD(+) site is built by glutamine 113 and asparagine 132. The oxaloacetate site is built by asparagine 132, arginine 163, histidine 188, and serine 243. The active-site Proton acceptor is the histidine 188.

It belongs to the LDH/MDH superfamily. MDH type 2 family. As to quaternary structure, homodimer.

The protein localises to the cytoplasm. It catalyses the reaction (S)-malate + NAD(+) = oxaloacetate + NADH + H(+). In terms of biological role, catalyzes the reduction of the carbonyl group of oxalacetic acid. No activity with pulegone. The chain is Malate dehydrogenase (MD1) from Nicotiana tabacum (Common tobacco).